The primary structure comprises 313 residues: MPKSTIRIATRQSPLAMWQALYVKEQLQIAHPSLVVELVPMVTKGDIILDTPLAKVGGKGLFVKELELALLSSRADIAVHSMKDVPIDFPEGLGLVTICEREDPRDAFVSNHYDSLEQLPAGSVVGTSSLRRQCQLKALRPDLIIRDLRGNVGTRLSKLDNGDYDAIILAVAGLKRLKLTERIRSSLSAEQSLPAVGQGAVGIECRLDDHDTQALLAALNHADTATCVKAERAMNTRLEGGCQVPIGSYAIWQNDKIWLRALVGAPDGKTILRGERLVSPEDAEQAGISLAEELLDKGAREILTAVYQGNTAI.

C242 is subject to S-(dipyrrolylmethanemethyl)cysteine.

Belongs to the HMBS family. As to quaternary structure, monomer. Dipyrromethane is required as a cofactor.

It carries out the reaction 4 porphobilinogen + H2O = hydroxymethylbilane + 4 NH4(+). The protein operates within porphyrin-containing compound metabolism; protoporphyrin-IX biosynthesis; coproporphyrinogen-III from 5-aminolevulinate: step 2/4. Its function is as follows. Tetrapolymerization of the monopyrrole PBG into the hydroxymethylbilane pre-uroporphyrinogen in several discrete steps. This chain is Porphobilinogen deaminase (hemC), found in Proteus mirabilis.